A 488-amino-acid chain; its full sequence is Proline--tRNA ligase (488 aa).

This sequence belongs to the class-II aminoacyl-tRNA synthetase family. ProS type 3 subfamily. As to quaternary structure, homodimer.

It is found in the cytoplasm. The catalysed reaction is tRNA(Pro) + L-proline + ATP = L-prolyl-tRNA(Pro) + AMP + diphosphate. Functionally, catalyzes the attachment of proline to tRNA(Pro) in a two-step reaction: proline is first activated by ATP to form Pro-AMP and then transferred to the acceptor end of tRNA(Pro). The sequence is that of Proline--tRNA ligase from Pyrobaculum islandicum (strain DSM 4184 / JCM 9189 / GEO3).